A 190-amino-acid chain; its full sequence is Cytoplasmic envelopment protein 3 (190 aa).

A lipid anchor (N-myristoyl glycine; by host) is attached at Gly-2. Residues 27–190 (RQVSLRSYDN…TKKPAASLPF (164 aa)) form a disordered region. Polar residues predominate over residues 30-43 (SLRSYDNIPPTSSS). The segment covering 44-58 (DEGEDDDDGEDDDNE) has biased composition (acidic residues). Basic and acidic residues predominate over residues 80–90 (SHREATHDGSK). The span at 108–123 (KQSKKKKKPSKHHHHQ) shows a compositional bias: basic residues. The span at 130–139 (ETDDLDEEDT) shows a compositional bias: acidic residues.

This sequence belongs to the herpesviridae cytoplasmic envelopment protein 3 family. As to quaternary structure, interacts with cytoplasmic envelopment protein 2; this interaction is essential for the proper localization of each protein to the assembly complex and thus for the production of infectious virus. Post-translationally, myristoylation and palmitoylation (probably on one or more of the nearby cysteines at the N-terminus) enable membrane-binding and Golgi apparatus-specific targeting and are essential for efficient packaging. In terms of processing, phosphorylated. Phosphorylation does not seem to be required for recycling to the host Golgi apparatus. Packaging is selective for underphosphorylated forms.

The protein localises to the virion tegument. The protein resides in the virion membrane. Its subcellular location is the host cell membrane. It localises to the host Golgi apparatus membrane. In terms of biological role, plays an important role in the cytoplasmic envelopment of tegument proteins and capsids during the assembly and egress processes. Also participates in viral entry at the fusion step probably by regulating the core fusion machinery. The polypeptide is Cytoplasmic envelopment protein 3 (UL99) (Human cytomegalovirus (strain AD169) (HHV-5)).